A 126-amino-acid polypeptide reads, in one-letter code: Aspartate 1-decarboxylase (126 aa).

The Schiff-base intermediate with substrate; via pyruvic acid role is filled by Ser25. The residue at position 25 (Ser25) is a Pyruvic acid (Ser). Substrate is bound at residue Thr57. Tyr58 acts as the Proton donor in catalysis. Residue 73–75 (GGA) coordinates substrate.

It belongs to the PanD family. As to quaternary structure, heterooctamer of four alpha and four beta subunits. Pyruvate serves as cofactor. Is synthesized initially as an inactive proenzyme, which is activated by self-cleavage at a specific serine bond to produce a beta-subunit with a hydroxyl group at its C-terminus and an alpha-subunit with a pyruvoyl group at its N-terminus.

Its subcellular location is the cytoplasm. It carries out the reaction L-aspartate + H(+) = beta-alanine + CO2. It participates in cofactor biosynthesis; (R)-pantothenate biosynthesis; beta-alanine from L-aspartate: step 1/1. Functionally, catalyzes the pyruvoyl-dependent decarboxylation of aspartate to produce beta-alanine. This chain is Aspartate 1-decarboxylase, found in Xanthomonas oryzae pv. oryzae (strain MAFF 311018).